The sequence spans 487 residues: Acetyl-coenzyme A carboxylase carboxyl transferase subunit beta, chloroplastic (487 aa).

A disordered region spans residues Ser180–Thr201. In terms of domain architecture, CoA carboxyltransferase N-terminal spans Leu218–Lys487. The Zn(2+) site is built by Cys222, Cys225, Cys241, and Cys244. The segment at Cys222–Cys244 adopts a C4-type zinc-finger fold.

The protein belongs to the AccD/PCCB family. Acetyl-CoA carboxylase is a heterohexamer composed of biotin carboxyl carrier protein, biotin carboxylase and 2 subunits each of ACCase subunit alpha and ACCase plastid-coded subunit beta (accD). Requires Zn(2+) as cofactor.

The protein resides in the plastid. It localises to the chloroplast stroma. It catalyses the reaction N(6)-carboxybiotinyl-L-lysyl-[protein] + acetyl-CoA = N(6)-biotinyl-L-lysyl-[protein] + malonyl-CoA. Its pathway is lipid metabolism; malonyl-CoA biosynthesis; malonyl-CoA from acetyl-CoA: step 1/1. Its function is as follows. Component of the acetyl coenzyme A carboxylase (ACC) complex. Biotin carboxylase (BC) catalyzes the carboxylation of biotin on its carrier protein (BCCP) and then the CO(2) group is transferred by the transcarboxylase to acetyl-CoA to form malonyl-CoA. In Atropa belladonna (Belladonna), this protein is Acetyl-coenzyme A carboxylase carboxyl transferase subunit beta, chloroplastic.